The sequence spans 210 residues: 7-carboxy-7-deazaguanine synthase (210 aa).

Substrate contacts are provided by residues 12–14 (LQG) and arginine 27. A Radical SAM core domain is found at 18–210 (QAGRAAVFCR…LQTHKYIGIP (193 aa)). Residues cysteine 31, cysteine 46, and cysteine 49 each contribute to the [4Fe-4S] cluster site. Position 51 (threonine 51) interacts with Mg(2+). Position 90 (threonine 90) interacts with substrate. Residues glycine 92, 133–135 (SPK), and 173–176 (QPMD) contribute to the S-adenosyl-L-methionine site. Proline 210 serves as a coordination point for substrate.

It belongs to the radical SAM superfamily. 7-carboxy-7-deazaguanine synthase family. In terms of assembly, homodimer. The cofactor is [4Fe-4S] cluster. It depends on S-adenosyl-L-methionine as a cofactor. Mg(2+) is required as a cofactor.

It catalyses the reaction 6-carboxy-5,6,7,8-tetrahydropterin + H(+) = 7-carboxy-7-deazaguanine + NH4(+). It functions in the pathway purine metabolism; 7-cyano-7-deazaguanine biosynthesis. Functionally, catalyzes the complex heterocyclic radical-mediated conversion of 6-carboxy-5,6,7,8-tetrahydropterin (CPH4) to 7-carboxy-7-deazaguanine (CDG), a step common to the biosynthetic pathways of all 7-deazapurine-containing compounds. The polypeptide is 7-carboxy-7-deazaguanine synthase (Bordetella pertussis (strain Tohama I / ATCC BAA-589 / NCTC 13251)).